A 405-amino-acid polypeptide reads, in one-letter code: MNISSAQFIPGVHTVEEIEAEIHKNLHISKSCSYQKVPNSHKEFTKFCYEVYNEIKISDKEFKEKRAALDTLRLCLKRISPDAELVAFGSLESGLALKNSDMDLCVLMDSRVQSDTIALQFYEELIAEGFEGKFLQRARIPIIKLTSDTKNGFGASFQCDIGFNNRLAIHNTLLLSSYTKLDARLKPMVLLVKHWAKRKQINSPYFGTLSSYGYVLMVLYYLIHVIKPPVFPNLLLSPLKQEKIVDGFDVGFDDKLEDIPPSQNYSSLGSLLHGFFRFYAYKFEPREKVVTFRRPDGYLTKQEKGWTSATEHTGSADQIIKDRYILAIEDPFEISHNVGRTVSSSGLYRIRGEFMAASRLLNSRSYPIPYDSLFEEAPIPPRRQKKTDEQSNKKLLNETDGDNSE.

S90 contributes to the UTP binding site. Mg(2+) contacts are provided by D101 and D103. UTP is bound by residues A168, N171, T172, K193, K197, S211, Y212, and H336. Positions 267-336 (SLGSLLHGFF…AIEDPFEISH (70 aa)) constitute a PAP-associated domain. R340 contacts ATP. The tract at residues 377–405 (APIPPRRQKKTDEQSNKKLLNETDGDNSE) is disordered. Basic and acidic residues predominate over residues 386–397 (KTDEQSNKKLLN).

Belongs to the DNA polymerase type-B-like family. Mg(2+) serves as cofactor. Requires Mn(2+) as cofactor.

Its subcellular location is the cytoplasm. It catalyses the reaction RNA(n) + UTP = RNA(n)-3'-uridine ribonucleotide + diphosphate. It carries out the reaction RNA(n) + ATP = RNA(n)-3'-adenine ribonucleotide + diphosphate. In terms of biological role, cytoplasmic uridylyltransferase that mediates the terminal uridylation of mRNAs with short poly(A) tails such as such as act1, hcn1 and urg1 mRNAs, hence facilitating global mRNA decay. Uridylates the 3' ends of actin mRNAs upon S-phase arrest. Also has a weak poly(A) polymerase (PAP) activity. Residue His-336 is responsible for the specificity for UTP. Involved in cell cycle arrest where in association with crb2/rhp9 and chk1 it inhibits unscheduled mitosis. This chain is Terminal uridylyltransferase cid1, found in Schizosaccharomyces pombe (strain 972 / ATCC 24843) (Fission yeast).